Consider the following 138-residue polypeptide: Large ribosomal subunit protein uL16 (138 aa).

The protein belongs to the universal ribosomal protein uL16 family. As to quaternary structure, part of the 50S ribosomal subunit.

Functionally, binds 23S rRNA and is also seen to make contacts with the A and possibly P site tRNAs. The protein is Large ribosomal subunit protein uL16 of Chlamydia caviae (strain ATCC VR-813 / DSM 19441 / 03DC25 / GPIC) (Chlamydophila caviae).